Reading from the N-terminus, the 354-residue chain is Selenide, water dikinase (354 aa).

The active site involves C23. Residues K26 and 54–56 each bind ATP; that span reads TSD. D57 is a Mg(2+) binding site. ATP is bound by residues D74, D97, and 145–147; that span reads GHS. D97 is a Mg(2+) binding site. Residue D233 participates in Mg(2+) binding.

Belongs to the selenophosphate synthase 1 family. Class I subfamily. In terms of assembly, homodimer. Mg(2+) is required as a cofactor.

It catalyses the reaction hydrogenselenide + ATP + H2O = selenophosphate + AMP + phosphate + 2 H(+). Synthesizes selenophosphate from selenide and ATP. The chain is Selenide, water dikinase from Burkholderia orbicola (strain MC0-3).